Here is a 147-residue protein sequence, read N- to C-terminus: 3-dehydroquinate dehydratase (147 aa).

The active-site Proton acceptor is Tyr-24. 3 residues coordinate substrate: Asn-75, His-81, and Asp-88. The Proton donor role is filled by His-101. Substrate is bound by residues 102-103 (LS) and Arg-112.

It belongs to the type-II 3-dehydroquinase family. Homododecamer.

The enzyme catalyses 3-dehydroquinate = 3-dehydroshikimate + H2O. It functions in the pathway metabolic intermediate biosynthesis; chorismate biosynthesis; chorismate from D-erythrose 4-phosphate and phosphoenolpyruvate: step 3/7. In terms of biological role, catalyzes a trans-dehydration via an enolate intermediate. The polypeptide is 3-dehydroquinate dehydratase (Caulobacter sp. (strain K31)).